Consider the following 1061-residue polypeptide: Lysine-specific demethylase jmjd-3.1 (1061 aa).

2 disordered regions span residues valine 30–valine 49 and lysine 256–threonine 417. Residues glutamine 271 to serine 287 are compositionally biased toward polar residues. Low complexity predominate over residues serine 310–serine 320. Residues valine 321 to glycine 330 show a composition bias toward polar residues. The required for nuclear localization stretch occupies residues lysine 369–threonine 417. The tract at residues isoleucine 418–glutamate 759 is required for binding of unc-3 and for function in Y-to-PDA transdifferentiation. In terms of domain architecture, JmjC spans asparagine 760–histidine 923. Positions 811, 813, and 891 each coordinate Fe cation. Zn(2+) is bound by residues cysteine 998, cysteine 1001, cysteine 1025, and cysteine 1028.

This sequence belongs to the UTX family. As to quaternary structure, interacts with wdr-5.1 and unc-3. The cofactor is Fe(2+). As to expression, mainly expressed in head and tail.

The protein resides in the nucleus. Histone demethylase that specifically demethylates trimethylated 'Lys-27' of histone H3, a mark associated with transcriptional repression, thereby playing a central role in the histone code. Involved in the transcriptional regulation of the heat shock response, unfolded protein response and possibly other stress response target genes. Required for gonad development and organization. Required for the robust transdifferentiation of the Y rectal epithelial cell to the PDA motor neuron during larval development. Acts cell-autonomously in Y-to-PDA transdifferentiation, which depends on the demethylase activity and on recognition of the H3 tail. Cooperates with set-2 and unc-3 to ensure robust Y-to-PDA transdifferentiation. Promotes mitochondrial stress-induced longevity. Involved in lifespan regulation. The chain is Lysine-specific demethylase jmjd-3.1 from Caenorhabditis elegans.